The chain runs to 122 residues: MIQAETRLTVADNSGAKVLGCIKVLGGSKRRYASVGDIIVVSVKEAIPNSKVKKGDVMKAVIVRTKKEIRRPDGTYIRFDDNSAVLINATKEPIGTRIFGPVARELRAKRFMKIISLAPEVL.

Belongs to the universal ribosomal protein uL14 family. As to quaternary structure, part of the 50S ribosomal subunit. Forms a cluster with proteins L3 and L19. In the 70S ribosome, L14 and L19 interact and together make contacts with the 16S rRNA in bridges B5 and B8.

Its function is as follows. Binds to 23S rRNA. Forms part of two intersubunit bridges in the 70S ribosome. This is Large ribosomal subunit protein uL14 from Desulfatibacillum aliphaticivorans.